Consider the following 127-residue polypeptide: Aspartate 1-decarboxylase (127 aa).

S25 (schiff-base intermediate with substrate; via pyruvic acid) is an active-site residue. The residue at position 25 (S25) is a Pyruvic acid (Ser). Substrate is bound at residue T57. The active-site Proton donor is Y58. A substrate-binding site is contributed by 73–75; the sequence is GAA.

This sequence belongs to the PanD family. In terms of assembly, heterooctamer of four alpha and four beta subunits. Pyruvate serves as cofactor. Is synthesized initially as an inactive proenzyme, which is activated by self-cleavage at a specific serine bond to produce a beta-subunit with a hydroxyl group at its C-terminus and an alpha-subunit with a pyruvoyl group at its N-terminus.

Its subcellular location is the cytoplasm. The catalysed reaction is L-aspartate + H(+) = beta-alanine + CO2. It participates in cofactor biosynthesis; (R)-pantothenate biosynthesis; beta-alanine from L-aspartate: step 1/1. Its function is as follows. Catalyzes the pyruvoyl-dependent decarboxylation of aspartate to produce beta-alanine. This chain is Aspartate 1-decarboxylase, found in Vesicomyosocius okutanii subsp. Calyptogena okutanii (strain HA).